A 70-amino-acid chain; its full sequence is Adenylate kinase (70 aa).

10-15 (GAGKGT) serves as a coordination point for ATP. An NMP region spans residues 30–59 (STGDLFRANISKQTELGKLAKSYMDKGELV). AMP is bound by residues Thr-31, Arg-36, and 57 to 59 (ELV).

This sequence belongs to the adenylate kinase family. Monomer.

It localises to the cytoplasm. The catalysed reaction is AMP + ATP = 2 ADP. Its pathway is purine metabolism; AMP biosynthesis via salvage pathway; AMP from ADP: step 1/1. Functionally, catalyzes the reversible transfer of the terminal phosphate group between ATP and AMP. Plays an important role in cellular energy homeostasis and in adenine nucleotide metabolism. The protein is Adenylate kinase (adk) of Streptomyces scabiei.